The sequence spans 295 residues: Small ribosomal subunit protein uS2 (295 aa).

Serine 2 bears the N-acetylserine mark. Position 43 is a phosphoserine (serine 43). Lysine 52 is modified (N6-acetyllysine). The interval 54 to 113 (TWEKLLLAARAIVAIENPADVSVISSRNTGQRAVLKFAAATGATPIAGRFTPGTFTNQIQ) is interaction with PPP1R16B. Lysine 89 bears the N6-acetyllysine; alternate mark. Residue lysine 89 forms a Glycyl lysine isopeptide (Lys-Gly) (interchain with G-Cter in SUMO2); alternate linkage. Position 97 is a phosphothreonine (threonine 97). Laminin-binding stretches follow at residues 161-180 (IPCNNKGAHSVGLMWWMLAR) and 205-229 (RDPEEIEKEEQAAAEKAVTKEEFQG). 5 [DE]-W-[ST] repeats span residues 230–232 (EWT), 247–249 (DWS), 266–268 (DWS), 275–277 (DWS), and 293–295 (EWS). Residues 242 to 295 (QPEVADWSEGVQVPSVPIQQFPTEDWSAQPTTEDWSAAPTAQATEWVGTTTEWS) form a laminin-binding region. Residues 266 to 295 (DWSAQPTTEDWSAAPTAQATEWVGTTTEWS) form a disordered region.

It belongs to the universal ribosomal protein uS2 family. In terms of assembly, monomer (37LRP) and homodimer (67LR). Component of the small ribosomal subunit. Mature ribosomes consist of a small (40S) and a large (60S) subunit. The 40S subunit contains about 33 different proteins and 1 molecule of RNA (18S). The 60S subunit contains about 49 different proteins and 3 molecules of RNA (28S, 5.8S and 5S). Interacts with RPS21. Interacts with several laminins including at least LAMB1. Interacts with MDK. The mature dimeric form interacts with PPP1R16B (via its fourth ankyrin repeat). Interacts with PPP1CA only in the presence of PPP1R16B. In terms of processing, acylated. Acylation may be a prerequisite for conversion of the monomeric 37 kDa laminin receptor precursor (37LRP) to the mature dimeric 67 kDa laminin receptor (67LR), and may provide a mechanism for membrane association. Post-translationally, cleaved by stromelysin-3 (ST3) at the cell surface. Cleavage by stromelysin-3 may be a mechanism to alter cell-extracellular matrix interactions.

It is found in the cell membrane. It localises to the cytoplasm. The protein localises to the nucleus. Functionally, required for the assembly and/or stability of the 40S ribosomal subunit. Required for the processing of the 20S rRNA-precursor to mature 18S rRNA in a late step of the maturation of 40S ribosomal subunits. Also functions as a cell surface receptor for laminin. Plays a role in cell adhesion to the basement membrane and in the consequent activation of signaling transduction pathways. May play a role in cell fate determination and tissue morphogenesis. Also acts as a receptor for several other ligands, including the pathogenic prion protein, viruses, and bacteria. Acts as a PPP1R16B-dependent substrate of PPP1CA. The chain is Small ribosomal subunit protein uS2 from Sus scrofa (Pig).